Here is a 508-residue protein sequence, read N- to C-terminus: TATA box-binding protein-like 1 (508 aa).

Disordered regions lie at residues 145 to 190 (QISY…QMHH), 236 to 262 (EPIP…PMPD), and 456 to 479 (QKKR…FDDS).

Belongs to the TBP family.

It localises to the nucleus. May be a general transcription factor. Plays an essential role for RNA polymerase II/ama-1 transcription in early embryos whereby it activates a subset of RNA polymerase II promoters and facilitates the reestablishment of transcription after mitosis. The protein is TATA box-binding protein-like 1 of Caenorhabditis elegans.